We begin with the raw amino-acid sequence, 123 residues long: Small ribosomal subunit protein uS13 (123 aa).

The segment at 89–123 (GRRHRSGLPVRGQRTRTNARTRKGKRKAVAKKKAK) is disordered. Positions 101-123 (QRTRTNARTRKGKRKAVAKKKAK) are enriched in basic residues.

It belongs to the universal ribosomal protein uS13 family. In terms of assembly, part of the 30S ribosomal subunit. Forms a loose heterodimer with protein S19. Forms two bridges to the 50S subunit in the 70S ribosome.

Functionally, located at the top of the head of the 30S subunit, it contacts several helices of the 16S rRNA. In the 70S ribosome it contacts the 23S rRNA (bridge B1a) and protein L5 of the 50S subunit (bridge B1b), connecting the 2 subunits; these bridges are implicated in subunit movement. Contacts the tRNAs in the A and P-sites. The polypeptide is Small ribosomal subunit protein uS13 (Cutibacterium acnes (strain DSM 16379 / KPA171202) (Propionibacterium acnes)).